We begin with the raw amino-acid sequence, 71 residues long: NAD(P)H-quinone oxidoreductase subunit O (71 aa).

This sequence belongs to the complex I NdhO subunit family. As to quaternary structure, NDH-1 can be composed of about 15 different subunits; different subcomplexes with different compositions have been identified which probably have different functions.

The protein localises to the cellular thylakoid membrane. The catalysed reaction is a plastoquinone + NADH + (n+1) H(+)(in) = a plastoquinol + NAD(+) + n H(+)(out). It catalyses the reaction a plastoquinone + NADPH + (n+1) H(+)(in) = a plastoquinol + NADP(+) + n H(+)(out). Its function is as follows. NDH-1 shuttles electrons from an unknown electron donor, via FMN and iron-sulfur (Fe-S) centers, to quinones in the respiratory and/or the photosynthetic chain. The immediate electron acceptor for the enzyme in this species is believed to be plastoquinone. Couples the redox reaction to proton translocation, and thus conserves the redox energy in a proton gradient. Cyanobacterial NDH-1 also plays a role in inorganic carbon-concentration. The polypeptide is NAD(P)H-quinone oxidoreductase subunit O (Picosynechococcus sp. (strain ATCC 27264 / PCC 7002 / PR-6) (Agmenellum quadruplicatum)).